The sequence spans 678 residues: AAC-rich mRNA clone AAC4 protein (678 aa).

Over residues 55–73 (NNNNNNNNNNNNNNNNNNN) the composition is skewed to low complexity. A disordered region spans residues 55–75 (NNNNNNNNNNNNNNNNNNNTS). A helical membrane pass occupies residues 243–263 (IIPIYHEIILVLCNWLVVAFY). The segment covering 318–346 (NNNNNNNNNNNNNNNNNNNNNNNNKTNNN) has biased composition (low complexity). Residues 318-347 (NNNNNNNNNNNNNNNNNNNNNNNNKTNNNQ) are disordered.

Its subcellular location is the membrane. This Dictyostelium discoideum (Social amoeba) protein is AAC-rich mRNA clone AAC4 protein (AAC4).